Reading from the N-terminus, the 269-residue chain is 3-methyl-2-oxobutanoate hydroxymethyltransferase (269 aa).

Residues D43 and D82 each contribute to the Mg(2+) site. Residues 43 to 44, D82, and K110 contribute to the 3-methyl-2-oxobutanoate site; that span reads DS. Residue E112 participates in Mg(2+) binding. Catalysis depends on E179, which acts as the Proton acceptor.

Belongs to the PanB family. As to quaternary structure, homodecamer; pentamer of dimers. The cofactor is Mg(2+).

The protein localises to the cytoplasm. The enzyme catalyses 3-methyl-2-oxobutanoate + (6R)-5,10-methylene-5,6,7,8-tetrahydrofolate + H2O = 2-dehydropantoate + (6S)-5,6,7,8-tetrahydrofolate. It functions in the pathway cofactor biosynthesis; (R)-pantothenate biosynthesis; (R)-pantoate from 3-methyl-2-oxobutanoate: step 1/2. Catalyzes the reversible reaction in which hydroxymethyl group from 5,10-methylenetetrahydrofolate is transferred onto alpha-ketoisovalerate to form ketopantoate. The protein is 3-methyl-2-oxobutanoate hydroxymethyltransferase of Acinetobacter baumannii (strain AB307-0294).